The sequence spans 73 residues: Translation initiation factor IF-1 (73 aa).

The region spanning Met1 to Lys73 is the S1-like domain.

It belongs to the IF-1 family. Component of the 30S ribosomal translation pre-initiation complex which assembles on the 30S ribosome in the order IF-2 and IF-3, IF-1 and N-formylmethionyl-tRNA(fMet); mRNA recruitment can occur at any time during PIC assembly.

Its subcellular location is the cytoplasm. In terms of biological role, one of the essential components for the initiation of protein synthesis. Stabilizes the binding of IF-2 and IF-3 on the 30S subunit to which N-formylmethionyl-tRNA(fMet) subsequently binds. Helps modulate mRNA selection, yielding the 30S pre-initiation complex (PIC). Upon addition of the 50S ribosomal subunit IF-1, IF-2 and IF-3 are released leaving the mature 70S translation initiation complex. This is Translation initiation factor IF-1 from Streptomyces coelicolor (strain ATCC BAA-471 / A3(2) / M145).